The sequence spans 68 residues: Peptide Hp1412 (68 aa).

The first 23 residues, 1 to 23, serve as a signal peptide directing secretion; it reads MKTHFAIFLITLFLFQMFSQSDA. Cysteine 36 is subject to Cysteine amide. Positions 40 to 68 are excised as a propeptide; it reads GLSDLYDLDEMFDGEISQADIDFLKELMR.

This sequence belongs to the non-disulfide-bridged peptide (NDBP) superfamily. Short antimicrobial peptide (group 4) family. Expressed by the venom gland.

The protein localises to the secreted. It localises to the target cell membrane. In terms of biological role, amphipathic peptide with antimicrobial activity. This Heterometrus petersii (Asian forest scorpion) protein is Peptide Hp1412.